A 164-amino-acid chain; its full sequence is Protein-export protein SecB (164 aa).

It belongs to the SecB family. As to quaternary structure, homotetramer, a dimer of dimers. One homotetramer interacts with 1 SecA dimer.

It is found in the cytoplasm. In terms of biological role, one of the proteins required for the normal export of preproteins out of the cell cytoplasm. It is a molecular chaperone that binds to a subset of precursor proteins, maintaining them in a translocation-competent state. It also specifically binds to its receptor SecA. The protein is Protein-export protein SecB of Zymomonas mobilis subsp. mobilis (strain ATCC 31821 / ZM4 / CP4).